Here is a 258-residue protein sequence, read N- to C-terminus: 5'-nucleotidase SurE (258 aa).

A divalent metal cation is bound by residues Asp-18, Asp-19, Ser-49, and Asn-102.

Belongs to the SurE nucleotidase family. The cofactor is a divalent metal cation.

Its subcellular location is the cytoplasm. The enzyme catalyses a ribonucleoside 5'-phosphate + H2O = a ribonucleoside + phosphate. Its function is as follows. Nucleotidase that shows phosphatase activity on nucleoside 5'-monophosphates. The chain is 5'-nucleotidase SurE from Vibrio campbellii (strain ATCC BAA-1116).